A 725-amino-acid chain; its full sequence is Catalase-peroxidase (725 aa).

The segment at residues 99 to 227 (WHAAGTYRIA…LAAVMMGLIY (129 aa)) is a cross-link (tryptophyl-tyrosyl-methioninium (Trp-Tyr) (with M-253)). Residue histidine 100 is the Proton acceptor of the active site. Positions 227 to 253 (YVNPEGVDGNPDPLKTAHDIRITFSRM) form a cross-link, tryptophyl-tyrosyl-methioninium (Tyr-Met) (with W-99). Histidine 268 contacts heme b.

This sequence belongs to the peroxidase family. Peroxidase/catalase subfamily. Homodimer or homotetramer. Requires heme b as cofactor. Formation of the three residue Trp-Tyr-Met cross-link is important for the catalase, but not the peroxidase activity of the enzyme.

It catalyses the reaction H2O2 + AH2 = A + 2 H2O. The enzyme catalyses 2 H2O2 = O2 + 2 H2O. Functionally, bifunctional enzyme with both catalase and broad-spectrum peroxidase activity. This is Catalase-peroxidase from Picosynechococcus sp. (strain ATCC 27264 / PCC 7002 / PR-6) (Agmenellum quadruplicatum).